Here is a 142-residue protein sequence, read N- to C-terminus: Putative pre-16S rRNA nuclease (142 aa).

It belongs to the YqgF nuclease family.

Its subcellular location is the cytoplasm. Could be a nuclease involved in processing of the 5'-end of pre-16S rRNA. This chain is Putative pre-16S rRNA nuclease, found in Lactobacillus acidophilus (strain ATCC 700396 / NCK56 / N2 / NCFM).